Here is a 159-residue protein sequence, read N- to C-terminus: 3-hydroxyacyl-[acyl-carrier-protein] dehydratase FabZ (159 aa).

Residue His58 is part of the active site.

It belongs to the thioester dehydratase family. FabZ subfamily.

It localises to the cytoplasm. The enzyme catalyses a (3R)-hydroxyacyl-[ACP] = a (2E)-enoyl-[ACP] + H2O. Involved in unsaturated fatty acids biosynthesis. Catalyzes the dehydration of short chain beta-hydroxyacyl-ACPs and long chain saturated and unsaturated beta-hydroxyacyl-ACPs. This Helicobacter pylori (strain J99 / ATCC 700824) (Campylobacter pylori J99) protein is 3-hydroxyacyl-[acyl-carrier-protein] dehydratase FabZ.